Reading from the N-terminus, the 540-residue chain is Maintenance of mitochondrial morphology protein 1 (540 aa).

At 1 to 25 (MAGPSNQTQPPPPVLTQPSLSFTQG) the chain is on the lumenal side. Residues 26-46 (LLVGQLSVVLLIGAFIKFFIF) form a helical membrane-spanning segment. The Cytoplasmic portion of the chain corresponds to 47-540 (GEAPPHPSRN…GSMPDPVVVT (494 aa)). Disordered stretches follow at residues 52 to 135 (HPSR…SHQP), 275 to 331 (GPGT…ATAA), 416 to 471 (GRTG…GGSM), and 509 to 540 (YGGA…VVVT). Polar residues-rich tracts occupy residues 69 to 81 (YSLN…SSPR), 88 to 105 (STSN…NTRS), and 112 to 121 (YSATPTNPTS). Residues 122–132 (KHSRSRPHHSS) are compositionally biased toward basic residues. The 276-residue stretch at 134 to 409 (QPESLDWFNV…EPRVQVVGLP (276 aa)) folds into the SMP-LTD domain. A compositionally biased stretch (low complexity) spans 321-331 (TNTNTAGATAA). Composition is skewed to gly residues over residues 442-471 (TAGG…GGSM) and 511-521 (GAQGGGGGGGR).

Belongs to the MMM1 family. Homodimer. Component of the ER-mitochondria encounter structure (ERMES) or MDM complex, composed of MMM1, MDM10, MDM12 and MDM34. An MMM1 homodimer associates with one molecule of MDM12 on each side in a pairwise head-to-tail manner, and the SMP-LTD domains of MMM1 and MDM12 generate a continuous hydrophobic tunnel for phospholipid trafficking.

It localises to the endoplasmic reticulum membrane. In terms of biological role, component of the ERMES/MDM complex, which serves as a molecular tether to connect the endoplasmic reticulum (ER) and mitochondria. Components of this complex are involved in the control of mitochondrial shape and protein biogenesis, and function in nonvesicular lipid trafficking between the ER and mitochondria. The MDM12-MMM1 subcomplex functions in the major beta-barrel assembly pathway that is responsible for biogenesis of all outer membrane beta-barrel proteins, and acts in a late step after the SAM complex. The MDM10-MDM12-MMM1 subcomplex further acts in the TOM40-specific pathway after the action of the MDM12-MMM1 complex. Essential for establishing and maintaining the structure of mitochondria and maintenance of mtDNA nucleoids. This chain is Maintenance of mitochondrial morphology protein 1, found in Blastomyces gilchristii (strain SLH14081) (Blastomyces dermatitidis).